We begin with the raw amino-acid sequence, 351 residues long: Peptide chain release factor 1 (351 aa).

Position 233 is an N5-methylglutamine (Gln-233).

Belongs to the prokaryotic/mitochondrial release factor family. In terms of processing, methylated by PrmC. Methylation increases the termination efficiency of RF1.

It is found in the cytoplasm. Its function is as follows. Peptide chain release factor 1 directs the termination of translation in response to the peptide chain termination codons UAG and UAA. The polypeptide is Peptide chain release factor 1 (prfA) (Treponema pallidum (strain Nichols)).